A 491-amino-acid polypeptide reads, in one-letter code: Protein nucleotidyltransferase YdiU (491 aa).

ATP is bound by residues Gly-92, Gly-94, Arg-95, Lys-115, Asp-127, Gly-128, Arg-178, and Arg-185. The active-site Proton acceptor is Asp-254. Mg(2+) is bound by residues Asn-255 and Asp-264. Asp-264 provides a ligand contact to ATP.

Belongs to the SELO family. Mg(2+) is required as a cofactor. Mn(2+) serves as cofactor.

The enzyme catalyses L-seryl-[protein] + ATP = 3-O-(5'-adenylyl)-L-seryl-[protein] + diphosphate. It carries out the reaction L-threonyl-[protein] + ATP = 3-O-(5'-adenylyl)-L-threonyl-[protein] + diphosphate. It catalyses the reaction L-tyrosyl-[protein] + ATP = O-(5'-adenylyl)-L-tyrosyl-[protein] + diphosphate. The catalysed reaction is L-histidyl-[protein] + UTP = N(tele)-(5'-uridylyl)-L-histidyl-[protein] + diphosphate. The enzyme catalyses L-seryl-[protein] + UTP = O-(5'-uridylyl)-L-seryl-[protein] + diphosphate. It carries out the reaction L-tyrosyl-[protein] + UTP = O-(5'-uridylyl)-L-tyrosyl-[protein] + diphosphate. Nucleotidyltransferase involved in the post-translational modification of proteins. It can catalyze the addition of adenosine monophosphate (AMP) or uridine monophosphate (UMP) to a protein, resulting in modifications known as AMPylation and UMPylation. This chain is Protein nucleotidyltransferase YdiU, found in Pseudarthrobacter chlorophenolicus (strain ATCC 700700 / DSM 12829 / CIP 107037 / JCM 12360 / KCTC 9906 / NCIMB 13794 / A6) (Arthrobacter chlorophenolicus).